A 240-amino-acid chain; its full sequence is MITVEKMLNSSVHLGHKVKQWNPRMRIYIYGERKGLHIIDLLQTIVCLKKACNFLIRSVRKGKRALFVCTKRFFSILTQKIALKCNSFFVTKRWLGGILTNWITIKNCINKLKQLSKQKEKHHNLLTKKERLVLKKKKLKLKKYFSGMRDMTERPEIVIIIGQNKEINAVRECKKLGIASITILDTNCDPTLTKYPIPSNDDSILSVSLILSVLCNSINRGVNNKVRQKFDKYKKFKKLS.

It belongs to the universal ribosomal protein uS2 family.

It localises to the plastid. It is found in the chloroplast. The protein is Small ribosomal subunit protein uS2c (rps2) of Euglena gracilis.